The chain runs to 279 residues: Large ribosomal subunit protein uL2 (279 aa).

Disordered stretches follow at residues 1-28 (MPARRYKPTSPGRRNSSVLTRDSVTKEK) and 221-279 (RGTV…GRRR). Residues 12–22 (GRRNSSVLTRD) are compositionally biased toward polar residues.

Belongs to the universal ribosomal protein uL2 family. In terms of assembly, part of the 50S ribosomal subunit. Forms a bridge to the 30S subunit in the 70S ribosome.

Functionally, one of the primary rRNA binding proteins. Required for association of the 30S and 50S subunits to form the 70S ribosome, for tRNA binding and peptide bond formation. It has been suggested to have peptidyltransferase activity; this is somewhat controversial. Makes several contacts with the 16S rRNA in the 70S ribosome. The protein is Large ribosomal subunit protein uL2 of Rubrobacter xylanophilus (strain DSM 9941 / JCM 11954 / NBRC 16129 / PRD-1).